The primary structure comprises 133 residues: p53 and DNA damage-regulated protein 1 (133 aa).

It belongs to the prefoldin subunit beta family. In terms of assembly, component of the PAQosome complex which is responsible for the biogenesis of several protein complexes and which consists of R2TP complex members RUVBL1, RUVBL2, RPAP3 and PIH1D1, URI complex members PFDN2, PFDN6, PDRG1, UXT and URI1 as well as ASDURF, POLR2E and DNAAF10/WDR92. Predominantly expressed in normal testis and exhibits reduced but detectable expression in other organs.

The protein resides in the cytoplasm. Functionally, may play a role in chaperone-mediated protein folding. The polypeptide is p53 and DNA damage-regulated protein 1 (PDRG1) (Homo sapiens (Human)).